A 117-amino-acid polypeptide reads, in one-letter code: S-adenosylmethionine decarboxylase proenzyme (117 aa).

Catalysis depends on Ser-63, which acts as the Schiff-base intermediate with substrate; via pyruvic acid. Ser-63 is subject to Pyruvic acid (Ser); by autocatalysis. His-68 serves as the catalytic Proton acceptor; for processing activity. Cys-83 serves as the catalytic Proton donor; for catalytic activity.

Belongs to the prokaryotic AdoMetDC family. Type 1 subfamily. As to quaternary structure, heterotetramer of two alpha and two beta chains arranged as a dimer of alpha/beta heterodimers. It depends on pyruvate as a cofactor. In terms of processing, is synthesized initially as an inactive proenzyme. Formation of the active enzyme involves a self-maturation process in which the active site pyruvoyl group is generated from an internal serine residue via an autocatalytic post-translational modification. Two non-identical subunits are generated from the proenzyme in this reaction, and the pyruvate is formed at the N-terminus of the alpha chain, which is derived from the carboxyl end of the proenzyme. The post-translation cleavage follows an unusual pathway, termed non-hydrolytic serinolysis, in which the side chain hydroxyl group of the serine supplies its oxygen atom to form the C-terminus of the beta chain, while the remainder of the serine residue undergoes an oxidative deamination to produce ammonia and the pyruvoyl group blocking the N-terminus of the alpha chain.

It catalyses the reaction S-adenosyl-L-methionine + H(+) = S-adenosyl 3-(methylsulfanyl)propylamine + CO2. It participates in amine and polyamine biosynthesis; S-adenosylmethioninamine biosynthesis; S-adenosylmethioninamine from S-adenosyl-L-methionine: step 1/1. Functionally, catalyzes the decarboxylation of S-adenosylmethionine to S-adenosylmethioninamine (dcAdoMet), the propylamine donor required for the synthesis of the polyamines spermine and spermidine from the diamine putrescine. In Methanococcus aeolicus (strain ATCC BAA-1280 / DSM 17508 / OCM 812 / Nankai-3), this protein is S-adenosylmethionine decarboxylase proenzyme.